Reading from the N-terminus, the 391-residue chain is Cathepsin E (391 aa).

Residues 1-19 (MKTFLLLLLVLLELGQAPG) form the signal peptide. The propeptide at 20-53 (ALHRVPLSRRESLRKKLRAQGQLTELWKSQNLNM) is activation peptide. Residues 74-387 (YFGTISIGSP…DRGNNRVGLA (314 aa)) form the Peptidase A1 domain. A glycan (N-linked (GlcNAc...) asparagine) is linked at N86. D92 is an active-site residue. Cystine bridges form between C105–C110 and C267–C271. Residue D276 is part of the active site. Cysteines 309 and 346 form a disulfide.

The protein belongs to the peptidase A1 family. In terms of assembly, homodimer; disulfide-linked. Glycosylated. The nature of the carbohydrate chain varies between cell types. As to expression, expressed abundantly in the surface and foveolar epithelial cells of the fundic and pyloric stomach mucosa, and at very low levels in the spleen.

It is found in the endosome. It catalyses the reaction Similar to cathepsin D, but slightly broader specificity.. Its function is as follows. May have a role in immune function. Probably involved in the processing of antigenic peptides during MHC class II-mediated antigen presentation. May play a role in activation-induced lymphocyte depletion in the thymus, and in neuronal degeneration and glial cell activation in the brain. In Cavia porcellus (Guinea pig), this protein is Cathepsin E (CTSE).